The sequence spans 181 residues: MTASTKDILATAIRSIPDYPKPGIIFRDITTLLGDAAAFRLAVDELVKPYEGLGVDKIAGMEARGFILGGAMAHQLSAGFVPIRKKGKLPYRTVSMAYALEYGTDEMEIHVDAVKPGEKVILCDDLIATGGTAVGAVKLLRQIGAEVVSACFVIDLPDLGGRKALEALGVEVRTLAEFSGH.

This sequence belongs to the purine/pyrimidine phosphoribosyltransferase family. Homodimer.

It is found in the cytoplasm. It catalyses the reaction AMP + diphosphate = 5-phospho-alpha-D-ribose 1-diphosphate + adenine. It participates in purine metabolism; AMP biosynthesis via salvage pathway; AMP from adenine: step 1/1. Functionally, catalyzes a salvage reaction resulting in the formation of AMP, that is energically less costly than de novo synthesis. The polypeptide is Adenine phosphoribosyltransferase (Neorhizobium galegae (Rhizobium galegae)).